A 351-amino-acid polypeptide reads, in one-letter code: Nuclear inhibitor of protein phosphatase 1 (351 aa).

An interaction with CDC5L, SF3B1 and MELK region spans residues Met1–Lys142. Residues Tyr49–Leu101 enclose the FHA domain. The segment at Met143 to Asn224 is interaction with EED. Thr161 bears the Phosphothreonine mark. A phosphoserine mark is found at Ser178 and Ser199. 2 consecutive short sequence motifs (nuclear localization signal) follow at residues Gly185–Ile209 and Ile210–Gly240. The tract at residues Arg191–Arg200 is involved in PP-1 inhibition. Positions Arg200 to Phe203 are involved in PP-1 binding. Ser204 carries the post-translational modification Phosphoserine. Ser249 carries the post-translational modification Phosphoserine. Tyr264 carries the post-translational modification Phosphotyrosine. Positions Ala310–Glu329 are interaction with EED. The disordered stretch occupies residues Asn314–Ile351. An RNA-binding region spans residues Pro330–Ile351. Positions Lys331–Lys337 are involved in PP-1 inhibition. Residue Tyr335 is modified to Phosphotyrosine.

In terms of assembly, interacts with phosphorylated CDC5L, SF3B1 and MELK. Part of the spliceosome. Interacts with PPP1CA, PPP1CB and PPP1CC. Interacts with EED. Part of a complex consisting of PPP1R8, EED, HDAC2 and PP-1. Post-translationally, may be inactivated by phosphorylation on Ser-199 or Ser-204.

The protein resides in the nucleus. It localises to the nucleus speckle. Its function is as follows. Inhibitor subunit of the major nuclear protein phosphatase-1 (PP-1). It has RNA-binding activity but does not cleave RNA and may target PP-1 to RNA-associated substrates. May also be involved in pre-mRNA splicing. Binds DNA and might act as a transcriptional repressor. Essential for cell proliferation and early embryonic development. The sequence is that of Nuclear inhibitor of protein phosphatase 1 (Ppp1r8) from Mus musculus (Mouse).